A 319-amino-acid polypeptide reads, in one-letter code: Acetyl esterase (319 aa).

Positions 91–93 (HGG) match the Involved in the stabilization of the negatively charged intermediate by the formation of the oxyanion hole motif. Residues Ser-165, Asp-262, and His-292 contribute to the active site.

The protein belongs to the 'GDXG' lipolytic enzyme family. In terms of assembly, homodimer. Interacts with MalT and MelA.

It localises to the cytoplasm. In terms of biological role, displays esterase activity towards short chain fatty esters (acyl chain length of up to 8 carbons). Able to hydrolyze triacetylglycerol (triacetin) and tributyrylglycerol (tributyrin), but not trioleylglycerol (triolein) or cholesterol oleate. Negatively regulates MalT activity by antagonizing maltotriose binding. Inhibits MelA galactosidase activity. This chain is Acetyl esterase, found in Escherichia coli O157:H7.